A 490-amino-acid chain; its full sequence is Bifunctional protein HldE (490 aa).

Residues 1-330 (MSRFDTLLQS…RKILPHASLA (330 aa)) form a ribokinase region. Residue 205-208 (NRKE) participates in ATP binding. Aspartate 275 is a catalytic residue. Residues 358 to 490 (FTNGCFDILH…LVEKAREGTT (133 aa)) are cytidylyltransferase.

In the N-terminal section; belongs to the carbohydrate kinase PfkB family. The protein in the C-terminal section; belongs to the cytidylyltransferase family. As to quaternary structure, homodimer.

It carries out the reaction D-glycero-beta-D-manno-heptose 7-phosphate + ATP = D-glycero-beta-D-manno-heptose 1,7-bisphosphate + ADP + H(+). It catalyses the reaction D-glycero-beta-D-manno-heptose 1-phosphate + ATP + H(+) = ADP-D-glycero-beta-D-manno-heptose + diphosphate. The protein operates within nucleotide-sugar biosynthesis; ADP-L-glycero-beta-D-manno-heptose biosynthesis; ADP-L-glycero-beta-D-manno-heptose from D-glycero-beta-D-manno-heptose 7-phosphate: step 1/4. It functions in the pathway nucleotide-sugar biosynthesis; ADP-L-glycero-beta-D-manno-heptose biosynthesis; ADP-L-glycero-beta-D-manno-heptose from D-glycero-beta-D-manno-heptose 7-phosphate: step 3/4. Catalyzes the phosphorylation of D-glycero-D-manno-heptose 7-phosphate at the C-1 position to selectively form D-glycero-beta-D-manno-heptose-1,7-bisphosphate. Its function is as follows. Catalyzes the ADP transfer from ATP to D-glycero-beta-D-manno-heptose 1-phosphate, yielding ADP-D-glycero-beta-D-manno-heptose. The sequence is that of Bifunctional protein HldE from Rhodopseudomonas palustris (strain BisB5).